We begin with the raw amino-acid sequence, 615 residues long: UvrABC system protein C (615 aa).

Positions Thr14–Ile91 constitute a GIY-YIG domain. A UVR domain is found at Asn196–Leu231.

Belongs to the UvrC family. As to quaternary structure, interacts with UvrB in an incision complex.

The protein localises to the cytoplasm. Functionally, the UvrABC repair system catalyzes the recognition and processing of DNA lesions. UvrC both incises the 5' and 3' sides of the lesion. The N-terminal half is responsible for the 3' incision and the C-terminal half is responsible for the 5' incision. This chain is UvrABC system protein C, found in Streptococcus pneumoniae (strain JJA).